The chain runs to 648 residues: Serine/arginine repetitive matrix protein 3 (648 aa).

Residues 1–44 are disordered; the sequence is MSSTVNNGATGMPAPPDAANGFPQPGASSGSWPRAEEELRAAEP. One can recognise a CWF21 domain in the interval 55–98; sequence LDHERKRRVELKCMELQEMMEEQGYSEEEIRQKVGTFRQMLMEK. The segment covering 99 to 109 has biased composition (basic and acidic residues); that stretch reads EGVLTREDRPG. Disordered regions lie at residues 99–139 and 154–648; these read EGVL…DGPV and YRTK…SGGF. Basic residues-rich tracts occupy residues 168–186, 199–211, and 219–243; these read PKKK…KKRR, LRKK…KHRR, and RRKR…RKRP. 2 stretches are compositionally biased toward low complexity: residues 257-276 and 289-317; these read SASS…GSPS and TGSQ…NGGS. Over residues 381–409 the composition is skewed to basic residues; that stretch reads ARRRRRRRRRRRSRSSANAPRRRGRRRTK. 3 stretches are compositionally biased toward low complexity: residues 414 to 428, 461 to 471, and 493 to 502; these read RGSS…SSSD, RPASTSPSPGT, and SWSSSRSPSK. Basic and acidic residues predominate over residues 525 to 544; that stretch reads LGRDKDSEGRARHAEAEAAR. A compositionally biased stretch (basic residues) spans 545–560; it reads TRRRSRSYSPIRKRRR. Positions 579–648 are enriched in low complexity; that stretch reads IPYYRPSPSS…SRSSSESGGF (70 aa).

The protein belongs to the CWC21 family.

May play a role in regulating breast cancer cell invasiveness. May be involved in RYBP-mediated breast cancer progression. The chain is Serine/arginine repetitive matrix protein 3 (Srrm3) from Mus musculus (Mouse).